The following is a 135-amino-acid chain: Ribosome-binding factor A (135 aa).

The protein belongs to the RbfA family. In terms of assembly, monomer. Binds 30S ribosomal subunits, but not 50S ribosomal subunits or 70S ribosomes.

It is found in the cytoplasm. Its function is as follows. One of several proteins that assist in the late maturation steps of the functional core of the 30S ribosomal subunit. Associates with free 30S ribosomal subunits (but not with 30S subunits that are part of 70S ribosomes or polysomes). Required for efficient processing of 16S rRNA. May interact with the 5'-terminal helix region of 16S rRNA. The chain is Ribosome-binding factor A from Dinoroseobacter shibae (strain DSM 16493 / NCIMB 14021 / DFL 12).